Reading from the N-terminus, the 241-residue chain is Orotidine 5'-phosphate decarboxylase (241 aa).

Residues Asp-15, Lys-36, 63–72 (DLKFHDIPNT), Thr-127, Arg-189, Gln-198, Gly-218, and Arg-219 each bind substrate. Residue Lys-65 is the Proton donor of the active site.

This sequence belongs to the OMP decarboxylase family. Type 1 subfamily. Homodimer.

It carries out the reaction orotidine 5'-phosphate + H(+) = UMP + CO2. Its pathway is pyrimidine metabolism; UMP biosynthesis via de novo pathway; UMP from orotate: step 2/2. In terms of biological role, catalyzes the decarboxylation of orotidine 5'-monophosphate (OMP) to uridine 5'-monophosphate (UMP). The chain is Orotidine 5'-phosphate decarboxylase from Prochlorococcus marinus (strain MIT 9211).